Here is a 285-residue protein sequence, read N- to C-terminus: NAD kinase (285 aa).

Asp-68 acts as the Proton acceptor in catalysis. NAD(+) contacts are provided by residues 68–69, 142–143, Arg-153, Lys-170, Asp-172, and Gln-242; these read DG and ND.

It belongs to the NAD kinase family. A divalent metal cation serves as cofactor.

Its subcellular location is the cytoplasm. It carries out the reaction NAD(+) + ATP = ADP + NADP(+) + H(+). In terms of biological role, involved in the regulation of the intracellular balance of NAD and NADP, and is a key enzyme in the biosynthesis of NADP. Catalyzes specifically the phosphorylation on 2'-hydroxyl of the adenosine moiety of NAD to yield NADP. This Koribacter versatilis (strain Ellin345) protein is NAD kinase.